A 218-amino-acid polypeptide reads, in one-letter code: Ras-related protein R-Ras (218 aa).

The segment at 1-30 (MSSGAASGTGRGRPRGGGPGPRDPPPGETH) is disordered. Over residues 7–20 (SGTGRGRPRGGGPG) the composition is skewed to gly residues. 36–44 (GGGGVGKSA) lines the GTP pocket. Positions 58–66 (YDPTIEDSY) match the Effector region motif. GTP is bound by residues 83–87 (DTAGQ), 142–145 (NKAD), and 172–174 (SAK). Residue Cys215 is modified to Cysteine methyl ester. A lipid anchor (S-geranylgeranyl cysteine) is attached at Cys215. A propeptide spans 216–218 (VLL) (removed in mature form).

The protein belongs to the small GTPase superfamily. Ras family. As to quaternary structure, interacts with PLCE1. Interacts (active GTP-bound form preferentially) with RGS14. Interacts with OSBPL3. Interacts with ZDHHC19. Post-translationally, S-palmitoylated by ZDHHC19, leading to increased association with membranes and with rafts/caveolae as well as enhanced cell viability.

It is found in the cell membrane. The catalysed reaction is GTP + H2O = GDP + phosphate + H(+). GTP-binding protein with GTPase activity, likely involved in the regulation of MAPK signaling pathway and thereby controlling multiple cellular processes. Regulates the organization of the actin cytoskeleton. With OSPBL3, modulates integrin beta-1 (ITGB1) activity. In Mus musculus (Mouse), this protein is Ras-related protein R-Ras (Rras).